The following is a 427-amino-acid chain: 3-isopropylmalate dehydratase large subunit (427 aa).

3 residues coordinate [4Fe-4S] cluster: cysteine 308, cysteine 368, and cysteine 371.

This sequence belongs to the aconitase/IPM isomerase family. LeuC type 2 subfamily. Heterodimer of LeuC and LeuD. It depends on [4Fe-4S] cluster as a cofactor.

It carries out the reaction (2R,3S)-3-isopropylmalate = (2S)-2-isopropylmalate. It functions in the pathway amino-acid biosynthesis; L-leucine biosynthesis; L-leucine from 3-methyl-2-oxobutanoate: step 2/4. Its function is as follows. Catalyzes the isomerization between 2-isopropylmalate and 3-isopropylmalate, via the formation of 2-isopropylmaleate. In Citrifermentans bemidjiense (strain ATCC BAA-1014 / DSM 16622 / JCM 12645 / Bem) (Geobacter bemidjiensis), this protein is 3-isopropylmalate dehydratase large subunit.